The primary structure comprises 327 residues: Glycerol-3-phosphate dehydrogenase [NAD(P)+] (327 aa).

Positions 16, 36, and 108 each coordinate NADPH. Residues K108, G136, and S138 each contribute to the sn-glycerol 3-phosphate site. A140 is a binding site for NADPH. Residues K191, D244, S254, R255, and N256 each coordinate sn-glycerol 3-phosphate. The active-site Proton acceptor is the K191. R255 contacts NADPH. 2 residues coordinate NADPH: L274 and E276.

This sequence belongs to the NAD-dependent glycerol-3-phosphate dehydrogenase family.

Its subcellular location is the cytoplasm. It catalyses the reaction sn-glycerol 3-phosphate + NAD(+) = dihydroxyacetone phosphate + NADH + H(+). It carries out the reaction sn-glycerol 3-phosphate + NADP(+) = dihydroxyacetone phosphate + NADPH + H(+). Its pathway is membrane lipid metabolism; glycerophospholipid metabolism. Catalyzes the reduction of the glycolytic intermediate dihydroxyacetone phosphate (DHAP) to sn-glycerol 3-phosphate (G3P), the key precursor for phospholipid synthesis. The protein is Glycerol-3-phosphate dehydrogenase [NAD(P)+] of Bradyrhizobium sp. (strain ORS 278).